A 290-amino-acid polypeptide reads, in one-letter code: Acetyl-coenzyme A carboxylase carboxyl transferase subunit beta (290 aa).

Positions 27-290 (LWIKCPSCEA…LTRQPADAVA (264 aa)) constitute a CoA carboxyltransferase N-terminal domain. C31, C34, C50, and C53 together coordinate Zn(2+). The C4-type zinc finger occupies 31 to 53 (CPSCEAVLYRNDVEANLHVCPKC).

This sequence belongs to the AccD/PCCB family. In terms of assembly, acetyl-CoA carboxylase is a heterohexamer composed of biotin carboxyl carrier protein (AccB), biotin carboxylase (AccC) and two subunits each of ACCase subunit alpha (AccA) and ACCase subunit beta (AccD). Requires Zn(2+) as cofactor.

Its subcellular location is the cytoplasm. The enzyme catalyses N(6)-carboxybiotinyl-L-lysyl-[protein] + acetyl-CoA = N(6)-biotinyl-L-lysyl-[protein] + malonyl-CoA. It functions in the pathway lipid metabolism; malonyl-CoA biosynthesis; malonyl-CoA from acetyl-CoA: step 1/1. Component of the acetyl coenzyme A carboxylase (ACC) complex. Biotin carboxylase (BC) catalyzes the carboxylation of biotin on its carrier protein (BCCP) and then the CO(2) group is transferred by the transcarboxylase to acetyl-CoA to form malonyl-CoA. The sequence is that of Acetyl-coenzyme A carboxylase carboxyl transferase subunit beta from Paraburkholderia phymatum (strain DSM 17167 / CIP 108236 / LMG 21445 / STM815) (Burkholderia phymatum).